A 136-amino-acid chain; its full sequence is Large ribosomal subunit protein uL16 (136 aa).

The protein belongs to the universal ribosomal protein uL16 family. In terms of assembly, part of the 50S ribosomal subunit.

Its function is as follows. Binds 23S rRNA and is also seen to make contacts with the A and possibly P site tRNAs. The chain is Large ribosomal subunit protein uL16 from Vibrio vulnificus (strain YJ016).